Reading from the N-terminus, the 267-residue chain is Thiamine pyrophosphokinase 1 (267 aa).

This sequence belongs to the thiamine pyrophosphokinase family. In terms of tissue distribution, expressed in roots, leaves and flowers.

It is found in the cytoplasm. It localises to the cytosol. It catalyses the reaction thiamine + ATP = thiamine diphosphate + AMP + H(+). Its pathway is cofactor biosynthesis; thiamine diphosphate biosynthesis; thiamine diphosphate from thiamine: step 1/1. Catalyzes the phosphorylation of thiamine to thiamine pyrophosphate (TPP). TPP is an active cofactor for enzymes involved in glycolysis and energy production. Plant leaves require high levels of TPP for photosynthesis and carbohydrate metabolism. This is Thiamine pyrophosphokinase 1 from Arabidopsis thaliana (Mouse-ear cress).